A 132-amino-acid polypeptide reads, in one-letter code: Hemoglobin subunit beta-1 (132 aa).

A Globin domain is found at 1–132 (WSKIDIDVCG…VVSALGRQYH (132 aa)). Heme b contacts are provided by His-49 and His-78.

It belongs to the globin family. Hb 1 is a heterotetramer of two alpha-1 and two beta-1 chains. Hb 2 is a heterotetramer of two alpha-2 and two beta-1 chains. Red blood cells.

Its function is as follows. Involved in oxygen transport from gills to the various peripheral tissues. In Arctogadus glacialis (Arctic cod), this protein is Hemoglobin subunit beta-1 (hbb1).